We begin with the raw amino-acid sequence, 242 residues long: Beta-glucanase (242 aa).

The N-terminal stretch at 1–28 (MPYLKRVLLLLVTGLFMSLFAVTATASA) is a signal peptide. Gln-29 carries the pyrrolidone carboxylic acid modification. The GH16 domain occupies 29-242 (QTGGSFFDPF…HYDWVRYTKK (214 aa)). A disulfide bond links Cys-60 and Cys-89. Glu-133 acts as the Nucleophile in catalysis. Glu-137 serves as the catalytic Proton donor.

It belongs to the glycosyl hydrolase 16 family.

It localises to the secreted. It carries out the reaction Hydrolysis of (1-&gt;4)-beta-D-glucosidic linkages in beta-D-glucans containing (1-&gt;3)- and (1-&gt;4)-bonds.. The sequence is that of Beta-glucanase (bglS) from Bacillus subtilis (strain 168).